The following is a 104-amino-acid chain: DNA-directed RNA polymerase subunit omega (104 aa).

Belongs to the RNA polymerase subunit omega family. As to quaternary structure, the RNAP catalytic core consists of 2 alpha, 1 beta, 1 beta' and 1 omega subunit. When a sigma factor is associated with the core the holoenzyme is formed, which can initiate transcription.

The enzyme catalyses RNA(n) + a ribonucleoside 5'-triphosphate = RNA(n+1) + diphosphate. Its function is as follows. Promotes RNA polymerase assembly. Latches the N- and C-terminal regions of the beta' subunit thereby facilitating its interaction with the beta and alpha subunits. The polypeptide is DNA-directed RNA polymerase subunit omega (Streptococcus thermophilus (strain CNRZ 1066)).